Consider the following 467-residue polypeptide: Chromosomal replication initiator protein DnaA (467 aa).

Residues 1–87 (MSSSLWLQCL…VGSRPVVAPK (87 aa)) are domain I, interacts with DnaA modulators. The domain II stretch occupies residues 87–130 (KPAPVRTAADVAAESSAPAQLAQRKPIHKTWDDDSAAADITHRS). The domain III, AAA+ region stretch occupies residues 131-347 (NVNPKHKFNN…GALNRVIANA (217 aa)). 4 residues coordinate ATP: Gly175, Gly177, Lys178, and Thr179. Residues 348–467 (NFTGRPITID…YSNLIRTLSS (120 aa)) are domain IV, binds dsDNA.

It belongs to the DnaA family. As to quaternary structure, oligomerizes as a right-handed, spiral filament on DNA at oriC.

The protein localises to the cytoplasm. Functionally, plays an essential role in the initiation and regulation of chromosomal replication. ATP-DnaA binds to the origin of replication (oriC) to initiate formation of the DNA replication initiation complex once per cell cycle. Binds the DnaA box (a 9 base pair repeat at the origin) and separates the double-stranded (ds)DNA. Forms a right-handed helical filament on oriC DNA; dsDNA binds to the exterior of the filament while single-stranded (ss)DNA is stabiized in the filament's interior. The ATP-DnaA-oriC complex binds and stabilizes one strand of the AT-rich DNA unwinding element (DUE), permitting loading of DNA polymerase. After initiation quickly degrades to an ADP-DnaA complex that is not apt for DNA replication. Binds acidic phospholipids. This Vibrio cholerae serotype O1 (strain ATCC 39315 / El Tor Inaba N16961) protein is Chromosomal replication initiator protein DnaA.